The following is a 208-amino-acid chain: Ribosomal RNA large subunit methyltransferase E (208 aa).

Positions 63, 65, 83, 99, and 124 each coordinate S-adenosyl-L-methionine. The Proton acceptor role is filled by K164.

It belongs to the class I-like SAM-binding methyltransferase superfamily. RNA methyltransferase RlmE family.

Its subcellular location is the cytoplasm. It carries out the reaction uridine(2552) in 23S rRNA + S-adenosyl-L-methionine = 2'-O-methyluridine(2552) in 23S rRNA + S-adenosyl-L-homocysteine + H(+). In terms of biological role, specifically methylates the uridine in position 2552 of 23S rRNA at the 2'-O position of the ribose in the fully assembled 50S ribosomal subunit. The polypeptide is Ribosomal RNA large subunit methyltransferase E (Enterobacter sp. (strain 638)).